Here is a 28-residue protein sequence, read N- to C-terminus: Conotoxin Cl1.2 (28 aa).

Post-translationally, contains 2 disulfide bonds. In terms of tissue distribution, expressed by the venom duct.

It localises to the secreted. The sequence is that of Conotoxin Cl1.2 from Californiconus californicus (California cone).